Reading from the N-terminus, the 185-residue chain is Ribosome-recycling factor (185 aa).

The protein belongs to the RRF family.

It localises to the cytoplasm. Responsible for the release of ribosomes from messenger RNA at the termination of protein biosynthesis. May increase the efficiency of translation by recycling ribosomes from one round of translation to another. The protein is Ribosome-recycling factor of Oceanobacillus iheyensis (strain DSM 14371 / CIP 107618 / JCM 11309 / KCTC 3954 / HTE831).